The primary structure comprises 244 residues: Phosphoadenosine 5'-phosphosulfate reductase (244 aa).

C239 serves as the catalytic Nucleophile; cysteine thiosulfonate intermediate.

This sequence belongs to the PAPS reductase family. CysH subfamily.

Its subcellular location is the cytoplasm. The enzyme catalyses [thioredoxin]-disulfide + sulfite + adenosine 3',5'-bisphosphate + 2 H(+) = [thioredoxin]-dithiol + 3'-phosphoadenylyl sulfate. Its pathway is sulfur metabolism; hydrogen sulfide biosynthesis; sulfite from sulfate: step 3/3. Its function is as follows. Catalyzes the formation of sulfite from phosphoadenosine 5'-phosphosulfate (PAPS) using thioredoxin as an electron donor. The chain is Phosphoadenosine 5'-phosphosulfate reductase from Escherichia coli O6:K15:H31 (strain 536 / UPEC).